Consider the following 58-residue polypeptide: Large ribosomal subunit protein uL30 (58 aa).

Belongs to the universal ribosomal protein uL30 family. Part of the 50S ribosomal subunit.

The chain is Large ribosomal subunit protein uL30 from Pseudomonas fluorescens (strain ATCC BAA-477 / NRRL B-23932 / Pf-5).